A 75-amino-acid polypeptide reads, in one-letter code: Large ribosomal subunit protein bL28 (75 aa).

Positions 1–21 (MARVCQVTGKRPMSGNKRSHA) are disordered.

This sequence belongs to the bacterial ribosomal protein bL28 family.

The chain is Large ribosomal subunit protein bL28 from Blochmanniella pennsylvanica (strain BPEN).